The chain runs to 120 residues: uncharacterized protein (120 aa).

Asn29 and Asn68 each carry an N-linked (GlcNAc...) asparagine; by host glycan. The chain crosses the membrane as a helical span at residues Ile74–Leu94.

The protein belongs to the asfivirus B117L family.

It localises to the host membrane. The protein localises to the virion. This is an uncharacterized protein from Ornithodoros (relapsing fever ticks).